A 121-amino-acid polypeptide reads, in one-letter code: Small ribosomal subunit protein uS13 (121 aa).

Residues 91 to 121 (HKRGLPVRGQRTRTNARTRKGPRRAAASLKK) are disordered.

The protein belongs to the universal ribosomal protein uS13 family. Part of the 30S ribosomal subunit. Forms a loose heterodimer with protein S19. Forms two bridges to the 50S subunit in the 70S ribosome.

In terms of biological role, located at the top of the head of the 30S subunit, it contacts several helices of the 16S rRNA. In the 70S ribosome it contacts the 23S rRNA (bridge B1a) and protein L5 of the 50S subunit (bridge B1b), connecting the 2 subunits; these bridges are implicated in subunit movement. Contacts the tRNAs in the A and P-sites. In Bordetella petrii (strain ATCC BAA-461 / DSM 12804 / CCUG 43448), this protein is Small ribosomal subunit protein uS13.